A 490-amino-acid polypeptide reads, in one-letter code: Betaine aldehyde dehydrogenase (490 aa).

Residues isoleucine 27 and aspartate 93 each contribute to the K(+) site. An NAD(+)-binding site is contributed by 150-152; sequence GAW. Catalysis depends on lysine 162, which acts as the Charge relay system. Position 176-179 (176-179) interacts with NAD(+); it reads KPSE. Residue valine 180 coordinates K(+). Residue 230–233 participates in NAD(+) binding; it reads GTTT. Leucine 246 lines the K(+) pocket. Glutamate 252 acts as the Proton acceptor in catalysis. NAD(+) is bound by residues glycine 254, cysteine 286, and glutamate 387. The active-site Nucleophile is the cysteine 286. Cysteine sulfenic acid (-SOH) is present on cysteine 286. Lysine 457 and glycine 460 together coordinate K(+). Residue glutamate 464 is the Charge relay system of the active site.

It belongs to the aldehyde dehydrogenase family. As to quaternary structure, dimer of dimers. K(+) serves as cofactor.

The enzyme catalyses betaine aldehyde + NAD(+) + H2O = glycine betaine + NADH + 2 H(+). It functions in the pathway amine and polyamine biosynthesis; betaine biosynthesis via choline pathway; betaine from betaine aldehyde: step 1/1. In terms of biological role, involved in the biosynthesis of the osmoprotectant glycine betaine. Catalyzes the irreversible oxidation of betaine aldehyde to the corresponding acid. In Pseudomonas putida (strain W619), this protein is Betaine aldehyde dehydrogenase.